The primary structure comprises 373 residues: Probable cysteine protease RD19C (373 aa).

An N-terminal signal peptide occupies residues 1-20; that stretch reads MDRVVFFFLIAATLLAGSLG. The propeptide at 21 to 139 is activation peptide; it reads STVISGEVTD…QTAPILPTSD (119 aa). 2 cysteine pairs are disulfide-bonded: cysteine 161-cysteine 211 and cysteine 195-cysteine 245. Residue cysteine 164 is part of the active site. Asparagine 258 is a glycosylation site (N-linked (GlcNAc...) asparagine). A disulfide bridge connects residues cysteine 301 and cysteine 356. Active-site residues include histidine 307 and asparagine 334.

The protein belongs to the peptidase C1 family.

Its subcellular location is the lytic vacuole. Probable thiol protease. This Arabidopsis thaliana (Mouse-ear cress) protein is Probable cysteine protease RD19C.